The sequence spans 677 residues: Collagen alpha-2(IX) chain (677 aa).

Residues 1–21 form the signal peptide; the sequence is MAHRSPALCLLLLHAACLCLA. The tract at residues 25–161 is triple-helical region 4 (COL4); the sequence is GPPGEPGPRG…PGKPGPPGHI (137 aa). Residues 28–41 are compositionally biased toward pro residues; sequence GEPGPRGPPGPPGV. The tract at residues 28-516 is disordered; that stretch reads GEPGPRGPPG…MPGQRGVAGR (489 aa). Low complexity predominate over residues 53–66; it reads SPGAPGSPGAKGEP. Residues 68–77 are compositionally biased toward pro residues; it reads APGPDGPPGK. Positions 91–100 are enriched in gly residues; that stretch reads GPWGGQGLKG. Composition is skewed to pro residues over residues 104–121 and 137–158; these read LPGP…PPGL and KGDP…PGPP. Residue proline 158 is modified to 4-hydroxyproline. Positions 162–178 are nonhelical region 4 (NC4); it reads QGVEGSADFLCPTNCPP. O-linked (Xyl...) (glycosaminoglycan) serine glycosylation is present at serine 167. Proline 178 bears the 4-hydroxyproline mark. Residues 179–517 are triple-helical region 3 (COL3); it reads GPKGPQGLQG…PGQRGVAGRD (339 aa). Position 181 is a 5-hydroxylysine (lysine 181). Lysine 181 is a glycosylation site (O-linked (Gal...) hydroxylysine). Position 190 is an allysine (lysine 190). Composition is skewed to low complexity over residues 363–382, 430–442, and 496–505; these read TPGL…AGVP, PGKT…TGDP, and RGLLGERGVP. Positions 518–547 are nonhelical region 3 (NC3); the sequence is AGDQHIIDVVLKMMQEQLAEVAVSAKRAAL. The segment at 548-630 is triple-helical region 2 (COL2); it reads GGVGAMGPPG…PGLPGIPGHA (83 aa). The interval 550–657 is disordered; sequence VGAMGPPGPP…GRPGSPGPAG (108 aa). Residues 555–565 show a composition bias toward pro residues; sequence PPGPPGPPGPP. Over residues 597-609 the composition is skewed to basic and acidic residues; it reads KRGEKGERGDTGR. The nonhelical region 2 (NC2) stretch occupies residues 631 to 632; sequence LA. The segment at 633-662 is triple-helical region 1 (COL1); the sequence is GKDGERGPPGVPGDAGRPGSPGPAGLPGFC. Residues 663–677 are nonhelical region 1 (NC1); it reads EPAACLGALPTPRHG.

The protein belongs to the fibril-associated collagens with interrupted helices (FACIT) family. As to quaternary structure, heterotrimer of an alpha 1(IX), an alpha 2(IX) and an alpha 3(IX) chain. The chains are linked to each other by interchain disulfide bonds. Trimers are also cross-linked via hydroxylysines. In terms of processing, covalently linked to the telopeptides of type II collagen by lysine-derived cross-links. Post-translationally, prolines at the third position of the tripeptide repeating unit (G-X-Y) are hydroxylated in some or all of the chains.

The protein resides in the secreted. The protein localises to the extracellular space. Its subcellular location is the extracellular matrix. Functionally, structural component of hyaline cartilage and vitreous of the eye. This chain is Collagen alpha-2(IX) chain (COL9A2), found in Gallus gallus (Chicken).